Reading from the N-terminus, the 307-residue chain is Ribonuclease HIII (307 aa).

The 215-residue stretch at 93–307 (MSVIGSDEVG…ANTQKAKKWL (215 aa)) folds into the RNase H type-2 domain. Residues Asp-99, Glu-100, and Asp-204 each coordinate a divalent metal cation.

It belongs to the RNase HII family. RnhC subfamily. Requires Mn(2+) as cofactor. The cofactor is Mg(2+).

The protein localises to the cytoplasm. It catalyses the reaction Endonucleolytic cleavage to 5'-phosphomonoester.. Functionally, endonuclease that specifically degrades the RNA of RNA-DNA hybrids. The sequence is that of Ribonuclease HIII from Bacillus pumilus (strain SAFR-032).